We begin with the raw amino-acid sequence, 153 residues long: Small ribosomal subunit protein uS5 (153 aa).

The S5 DRBM domain occupies 15-78 (FQEVVVNVGR…DDAFKNLIHV (64 aa)).

This sequence belongs to the universal ribosomal protein uS5 family. In terms of assembly, part of the 30S ribosomal subunit. Contacts proteins S4 and S8.

In terms of biological role, with S4 and S12 plays an important role in translational accuracy. Its function is as follows. Located at the back of the 30S subunit body where it stabilizes the conformation of the head with respect to the body. This is Small ribosomal subunit protein uS5 from Helicobacter acinonychis (strain Sheeba).